Here is a 1102-residue protein sequence, read N- to C-terminus: Ubiquitin carboxyl-terminal hydrolase 7 (1102 aa).

The span at 1-10 (MNHQQQQQQQ) shows a compositional bias: low complexity. The interval 1–38 (MNHQQQQQQQKAGEQQLSEPEDMEMEAGDTDDPPRITQ) is disordered. Residues 1 to 208 (MNHQQQQQQQ…APHGVAWDSK (208 aa)) are interaction with TSPYL5. S18 is subject to Phosphoserine. Residues 19–31 (EPEDMEMEAGDTD) show a composition bias toward acidic residues. At S49 the chain carries Phosphoserine. An interaction with p53/TP53, MDM2 and EBNA1 region spans residues 53 to 208 (NTAEEDMEDD…APHGVAWDSK (156 aa)). An MATH domain is found at 68–195 (EATFQFTVER…DDKVTFEVFV (128 aa)). The tract at residues 70-205 (TFQFTVERFS…QADAPHGVAW (136 aa)) is necessary for nuclear localization. Residues 214–521 (VGLKNQGATC…NAYMLVYIRE (308 aa)) enclose the USP domain. The active-site Nucleophile is the C223. The active-site Proton acceptor is H464. The segment at 622 to 801 (LWPMQARSNG…HRVDVIFCDK (180 aa)) is interaction with ICP0/VMW110. K869 is modified (N6-acetyllysine; alternate). K869 participates in a covalent cross-link: Glycyl lysine isopeptide (Lys-Gly) (interchain with G-Cter in SUMO2); alternate. A Glycyl lysine isopeptide (Lys-Gly) (interchain with G-Cter in ubiquitin); alternate cross-link involves residue K869. Residue K882 forms a Glycyl lysine isopeptide (Lys-Gly) (interchain with G-Cter in SUMO2) linkage. Position 963 is a phosphoserine (S963). N6-acetyllysine is present on residues K1084 and K1096.

It belongs to the peptidase C19 family. In terms of assembly, monomer. Homodimer. Part of a complex with DAXX, MDM2, RASSF1 and USP7. Part of a complex with DAXX, MDM2 and USP7. Interacts with MDM2; the interaction is independent of p53/TP53. Interacts with DAXX; the interaction is direct and independent of MDM2 and p53/TP53. Component of a complex composed of KMT2E/MLL5 (isoform 3), OGT (isoform 1) and USP7; the complex stabilizes KMT2E/MLL5, preventing KMT2E/MLL5 ubiquitination and proteasomal-mediated degradation. Interacts (via MATH domain) with KMT2E/MLL5 isoform 3. Interacts with OGT isoform 1. Interacts with FOXO4; the interaction is enhanced in presence of hydrogen peroxide and occurs independently of p53/TP53. Interacts with p53/TP53; the interaction is enhanced in response to DNA damage. Interacts with TSPYL5; this impairs interaction with p53/TP53. Interacts with PTEN; the interaction is direct. Interacts with ATXN1 and the strength of interaction is influenced by the length of the poly-Gln region in ATXN1. A weaker interaction seen with mutants having longer poly-Gln regions. Interacts with KIAA1530/UVSSA. Interacts with ABRAXAS2; the interaction is direct. Identified in a complex with TP53/p53 and ABRAXAS2. Interacts with MEX3C and antagonizes its ability to degrade mRNA. Interacts with DNMT1 and UHRF1. Interacts with FOXP3. Interacts (via MATH domain) with RNF220. Associated component of the Polycomb group (PcG) multiprotein PRC1-like complex. Interacts with EPOP. Interacts with OTUD4 and USP9X; the interaction is direct. Interacts with CRY2. Interacts with REST. Interacts with ERCC6. Part of a complex consisting of USP7, MAGEL2 and TRIM27; directly interacts with MAGEL2; directly interacts with TRIM27. (Microbial infection) Isoform 1 and isoform 2 interact with herpesvirus 1 trans-acting transcriptional protein ICP0/VMW110. Binding to ICP0/VMW110 may modulate the substrate specificity or activity of USP7 to stabilize viral proteins. As to quaternary structure, (Microbial infection) Interacts with Epstein-Barr virus EBNA1; the interaction is independent and simultaneous to EBNA1 interaction with USP7 as well as necessary for PML nuclear bodies disruption by EBNA1. EBNA1, USP7 and CSNK2B form a ternary complex. EBNA1 shows a 10-fold higher affinity than p53/TP53 and can compete with it for USP7 binding. In terms of assembly, (Microbial infection) Interacts with human cytomegalovirus proteins UL35 and UL35A; these interactions inhibit the ability of USP7 to form nuclear bodies. (Microbial infection) Interacts with herpes virus 8/HHV-8 proteins vIRF-1 and vIRF-3; these interactions may disrupt TP53 signaling pathway during viral infection by decreasing the availability of USP7 for deubiquitinating and stabilizing TP53. As to quaternary structure, (Microbial infection) Interacts with herpes virus 8/HHV-8 protein vIRF-2; this interaction modulates antiviral signaling via disruption of USP7 interactions with innate immune signaling proteins TRAF3 and TRAF6 thus affecting their ubiquitination. Isoform 1: Phosphorylated. Isoform 1 is phosphorylated at positions Ser-18 and Ser-963. Isoform 2: Not phosphorylated. Post-translationally, isoform 1: Polyneddylated. Isoform 2: Not Polyneddylated. In terms of processing, isoform 1 and isoform 2: Not sumoylated. Isoform 1 and isoform 2: Polyubiquitinated by herpesvirus 1 trans-acting transcriptional protein ICP0/VMW110; leading to its subsequent proteasomal degradation. Isoform 1: Ubiquitinated at Lys-869. In terms of tissue distribution, expressed in neural progenitor cells (at protein level). Widely expressed. Overexpressed in prostate cancer.

Its subcellular location is the nucleus. It localises to the cytoplasm. The protein localises to the PML body. The protein resides in the chromosome. It carries out the reaction Thiol-dependent hydrolysis of ester, thioester, amide, peptide and isopeptide bonds formed by the C-terminal Gly of ubiquitin (a 76-residue protein attached to proteins as an intracellular targeting signal).. With respect to regulation, inhibited by N-ethyl-maleimide (NEM) and divalent cations. Tolerates high concentrations of NaCl but is inhibited at concentrations of 195 mM and higher. Functionally, hydrolase that deubiquitinates target proteins such as ARMC5, FOXO4, DEPTOR, KAT5, p53/TP53, MDM2, ERCC6, DNMT1, UHRF1, PTEN, KMT2E/MLL5 and DAXX. Together with DAXX, prevents MDM2 self-ubiquitination and enhances the E3 ligase activity of MDM2 towards p53/TP53, thereby promoting p53/TP53 ubiquitination and proteasomal degradation. Deubiquitinates p53/TP53, preventing degradation of p53/TP53, and enhances p53/TP53-dependent transcription regulation, cell growth repression and apoptosis. Deubiquitinates p53/TP53 and MDM2 and strongly stabilizes p53/TP53 even in the presence of excess MDM2, and also induces p53/TP53-dependent cell growth repression and apoptosis. Deubiquitination of FOXO4 in presence of hydrogen peroxide is not dependent on p53/TP53 and inhibits FOXO4-induced transcriptional activity. In association with DAXX, is involved in the deubiquitination and translocation of PTEN from the nucleus to the cytoplasm, both processes that are counteracted by PML. Deubiquitinates KMT2E/MLL5 preventing KMT2E/MLL5 proteasomal-mediated degradation. Involved in cell proliferation during early embryonic development. Involved in transcription-coupled nucleotide excision repair (TC-NER) in response to UV damage: recruited to DNA damage sites following interaction with KIAA1530/UVSSA and promotes deubiquitination of ERCC6, preventing UV-induced degradation of ERCC6. Involved in maintenance of DNA methylation via its interaction with UHRF1 and DNMT1: acts by mediating deubiquitination of UHRF1 and DNMT1, preventing their degradation and promoting DNA methylation by DNMT1. Deubiquitinates alkylation repair enzyme ALKBH3. OTUD4 recruits USP7 and USP9X to stabilize ALKBH3, thereby promoting the repair of alkylated DNA lesions. Acts as a chromatin regulator via its association with the Polycomb group (PcG) multiprotein PRC1-like complex; may act by deubiquitinating components of the PRC1-like complex. Able to mediate deubiquitination of histone H2B; it is however unsure whether this activity takes place in vivo. Exhibits a preference towards 'Lys-48'-linked ubiquitin chains. Increases regulatory T-cells (Treg) suppressive capacity by deubiquitinating and stabilizing the transcription factor FOXP3 which is crucial for Treg cell function. Plays a role in the maintenance of the circadian clock periodicity via deubiquitination and stabilization of the CRY1 and CRY2 proteins. Deubiquitinates REST, thereby stabilizing REST and promoting the maintenance of neural progenitor cells. Deubiquitinates SIRT7, inhibiting SIRT7 histone deacetylase activity and regulating gluconeogenesis. Involved in the regulation of WASH-dependent actin polymerization at the surface of endosomes and the regulation of endosomal protein recycling. It maintains optimal WASH complex activity and precise F-actin levels via deubiquitination of TRIM27 and WASHC1. Mediates the deubiquitination of phosphorylated DEPTOR, promoting its stability and leading to decreased mTORC1 signaling. In terms of biological role, (Microbial infection) Contributes to the overall stabilization and trans-activation capability of the herpesvirus 1 trans-acting transcriptional protein ICP0/VMW110 during HSV-1 infection. (Microbial infection) Upon infection with Epstein-Barr virus, the interaction with viral EBNA1 increases the association of USP7 with PML proteins, which is required for the polyubiquitylation and degradation of PML. The protein is Ubiquitin carboxyl-terminal hydrolase 7 of Homo sapiens (Human).